Consider the following 474-residue polypeptide: Bifunctional protein HldE (474 aa).

Residues 1-318 form a ribokinase region; sequence MKVTLPDFNK…ENAIRGRADN (318 aa). 195–198 provides a ligand contact to ATP; the sequence is NMSE. The active site involves Asp-264. The segment at 344–474 is cytidylyltransferase; it reads MTNGCFDILH…TNIINAIKKK (131 aa).

It in the N-terminal section; belongs to the carbohydrate kinase PfkB family. In the C-terminal section; belongs to the cytidylyltransferase family. Homodimer.

The catalysed reaction is D-glycero-beta-D-manno-heptose 7-phosphate + ATP = D-glycero-beta-D-manno-heptose 1,7-bisphosphate + ADP + H(+). It catalyses the reaction D-glycero-beta-D-manno-heptose 1-phosphate + ATP + H(+) = ADP-D-glycero-beta-D-manno-heptose + diphosphate. Its pathway is nucleotide-sugar biosynthesis; ADP-L-glycero-beta-D-manno-heptose biosynthesis; ADP-L-glycero-beta-D-manno-heptose from D-glycero-beta-D-manno-heptose 7-phosphate: step 1/4. It functions in the pathway nucleotide-sugar biosynthesis; ADP-L-glycero-beta-D-manno-heptose biosynthesis; ADP-L-glycero-beta-D-manno-heptose from D-glycero-beta-D-manno-heptose 7-phosphate: step 3/4. In terms of biological role, catalyzes the phosphorylation of D-glycero-D-manno-heptose 7-phosphate at the C-1 position to selectively form D-glycero-beta-D-manno-heptose-1,7-bisphosphate. Catalyzes the ADP transfer from ATP to D-glycero-beta-D-manno-heptose 1-phosphate, yielding ADP-D-glycero-beta-D-manno-heptose. This Proteus mirabilis (strain HI4320) protein is Bifunctional protein HldE.